A 632-amino-acid polypeptide reads, in one-letter code: MAU2 chromatid cohesion factor homolog (632 aa).

TPR repeat units lie at residues 453–486 (GGFYYVQGLHAFHKNSFHEAKRFLRETLKMANAE) and 493–526 (SCSLVLLSHVFLSIGNSKESMNMVTPAMQLASKI).

Belongs to the SCC4/mau-2 family. Interacts with Nipped-B to form the cohesin loading complex.

Its subcellular location is the nucleus. It is found in the nucleoplasm. Its function is as follows. Required for association of the cohesin complex with chromatin during interphase. Plays a role in sister chromatid cohesion and normal progression through prometaphase. The polypeptide is MAU2 chromatid cohesion factor homolog (Drosophila melanogaster (Fruit fly)).